Reading from the N-terminus, the 242-residue chain is DNA repair protein RecO (242 aa).

This sequence belongs to the RecO family. In terms of assembly, monomer.

Its function is as follows. Involved in DNA repair and RecF pathway recombination. The protein is DNA repair protein RecO of Shigella flexneri.